Here is a 370-residue protein sequence, read N- to C-terminus: 2-oxoisovalerate dehydrogenase subunit beta, mitochondrial (370 aa).

The N-terminal 25 residues, 1-25 (MLRGNNIKKVNSLLVRSFHSTVGNR), are a transit peptide targeting the mitochondrion. Y130 serves as a coordination point for thiamine diphosphate. Residues G156, L158, T159, and E209 each coordinate K(+).

As to quaternary structure, heterotetramer of 2 alpha and 2 beta chains. The cofactor is thiamine diphosphate.

It is found in the mitochondrion matrix. The enzyme catalyses N(6)-[(R)-lipoyl]-L-lysyl-[protein] + 3-methyl-2-oxobutanoate + H(+) = N(6)-[(R)-S(8)-2-methylpropanoyldihydrolipoyl]-L-lysyl-[protein] + CO2. In terms of biological role, the branched-chain alpha-keto dehydrogenase complex catalyzes the overall conversion of alpha-keto acids to acyl-CoA and CO(2). It contains multiple copies of three enzymatic components: branched-chain alpha-keto acid decarboxylase (E1), lipoamide acyltransferase (E2) and lipoamide dehydrogenase (E3). This chain is 2-oxoisovalerate dehydrogenase subunit beta, mitochondrial (bkdB), found in Dictyostelium discoideum (Social amoeba).